We begin with the raw amino-acid sequence, 303 residues long: GTP cyclohydrolase FolE2 (303 aa).

This sequence belongs to the GTP cyclohydrolase IV family.

The catalysed reaction is GTP + H2O = 7,8-dihydroneopterin 3'-triphosphate + formate + H(+). Its pathway is cofactor biosynthesis; 7,8-dihydroneopterin triphosphate biosynthesis; 7,8-dihydroneopterin triphosphate from GTP: step 1/1. Functionally, converts GTP to 7,8-dihydroneopterin triphosphate. The sequence is that of GTP cyclohydrolase FolE2 from Exiguobacterium sp. (strain ATCC BAA-1283 / AT1b).